The chain runs to 268 residues: Glucosamine-6-phosphate deaminase (268 aa).

Residue Asp-67 is the Proton acceptor; for enolization step of the active site. Residue Asn-137 is the For ring-opening step of the active site. His-139 acts as the Proton acceptor; for ring-opening step in catalysis. Residue Glu-144 is the For ring-opening step of the active site.

It belongs to the glucosamine/galactosamine-6-phosphate isomerase family. NagB subfamily. As to quaternary structure, homohexamer.

It carries out the reaction alpha-D-glucosamine 6-phosphate + H2O = beta-D-fructose 6-phosphate + NH4(+). Its pathway is amino-sugar metabolism; N-acetylneuraminate degradation; D-fructose 6-phosphate from N-acetylneuraminate: step 5/5. In terms of biological role, catalyzes the reversible isomerization-deamination of glucosamine 6-phosphate (GlcN6P) to form fructose 6-phosphate (Fru6P) and ammonium ion. This chain is Glucosamine-6-phosphate deaminase, found in Pseudoalteromonas translucida (strain TAC 125).